The sequence spans 721 residues: Polyribonucleotide nucleotidyltransferase (721 aa).

Aspartate 495 and aspartate 501 together coordinate Mg(2+). Positions 562 to 621 (PRITTIKIRPERIKDIIGPGGKTIKDITARTGTSINIEDDGSVSIASPNQDKVEEAIKMI) constitute a KH domain. Positions 631–699 (GRIYLGTVRK…RSGKIRLSRK (69 aa)) constitute an S1 motif domain. Residues 699 to 721 (KEALADSAKKSEGTEPPKGEPAK) are disordered.

It belongs to the polyribonucleotide nucleotidyltransferase family. The cofactor is Mg(2+).

Its subcellular location is the cytoplasm. The catalysed reaction is RNA(n+1) + phosphate = RNA(n) + a ribonucleoside 5'-diphosphate. Functionally, involved in mRNA degradation. Catalyzes the phosphorolysis of single-stranded polyribonucleotides processively in the 3'- to 5'-direction. This is Polyribonucleotide nucleotidyltransferase from Anaeromyxobacter dehalogenans (strain 2CP-1 / ATCC BAA-258).